The primary structure comprises 290 residues: HTH-type transcriptional activator RhaR (290 aa).

Residues 179–277 (DLIMSALQQS…GMTPRDYRQR (99 aa)) enclose the HTH araC/xylS-type domain. 2 consecutive DNA-binding regions (H-T-H motif) follow at residues 196 to 217 (ANFC…RQQT) and 244 to 267 (ISDI…TREA).

Binds DNA as a dimer.

It is found in the cytoplasm. Activates expression of the rhaSR operon in response to L-rhamnose. In Yersinia pseudotuberculosis serotype O:3 (strain YPIII), this protein is HTH-type transcriptional activator RhaR.